The sequence spans 253 residues: uncharacterized protein (253 aa).

6–30 (IITASDSGIGKECALLLAQQGFDIG) lines the NADP(+) pocket. A substrate-binding site is contributed by Ser-140. The active-site Proton acceptor is the Tyr-153.

Belongs to the short-chain dehydrogenases/reductases (SDR) family.

This is an uncharacterized protein from Escherichia coli (strain K12).